Reading from the N-terminus, the 262-residue chain is Ribosome maturation factor RimP (262 aa).

Residues 197-262 (RELGVLPPPP…LGQTDPTEGD (66 aa)) are disordered. Residues 223-233 (KLPKAKLKAAK) show a composition bias toward basic residues. Basic and acidic residues predominate over residues 240–254 (TKEHRLAAAERKRLG).

Belongs to the RimP family.

The protein resides in the cytoplasm. In terms of biological role, required for maturation of 30S ribosomal subunits. This is Ribosome maturation factor RimP from Rhodopseudomonas palustris (strain BisB18).